The primary structure comprises 362 residues: PDZ and LIM domain protein 3 (362 aa).

In terms of domain architecture, PDZ spans 1–84 (MPQNVVLPGP…QLCLKIDRAE (84 aa)). Ser-18, Ser-92, and Ser-263 each carry phosphoserine. Positions 261-282 (DGSDDRPAGTRSVRPVTKVHGG) are disordered. In terms of domain architecture, LIM zinc-binding spans 290–349 (PLCDKCGSGIVGAVVKARDKYRHPECFVCADCNLNLKQKGYFFVEGELYCEMHARARTRP).

As to quaternary structure, interacts with ACTN2. Forms a heterodimer with PDLIM4 (via LIM domain). As to expression, highly expressed in skeletal muscle and at low levels in the heart.

Its subcellular location is the cytoplasm. It is found in the myofibril. It localises to the sarcomere. The protein localises to the z line. Functionally, may play a role in the organization of actin filament arrays within muscle cells. In Rattus norvegicus (Rat), this protein is PDZ and LIM domain protein 3 (Pdlim3).